Reading from the N-terminus, the 58-residue chain is ATP synthase F(0) complex subunit k, mitochondrial (58 aa).

N6-acetyllysine is present on residues Lys16 and Lys17. A helical membrane pass occupies residues 23–45 (TLTGRMNCVLATYGGIALLVLYF).

Component of the ATP synthase complex composed at least of ATP5F1A/subunit alpha, ATP5F1B/subunit beta, ATP5MC1/subunit c (homooctomer), MT-ATP6/subunit a, MT-ATP8/subunit 8, ATP5ME/subunit e, ATP5MF/subunit f, ATP5MG/subunit g, ATP5MK/subunit k, ATP5MJ/subunit j, ATP5F1C/subunit gamma, ATP5F1D/subunit delta, ATP5F1E/subunit epsilon, ATP5PF/subunit F6, ATP5PB/subunit b, ATP5PD/subunit d, ATP5PO/subunit OSCP. ATP synthase complex consists of a soluble F(1) head domain (subunits alpha(3) and beta(3)) - the catalytic core - and a membrane F(0) domain - the membrane proton channel (subunits c, a, 8, e, f, g, k and j). These two domains are linked by a central stalk (subunits gamma, delta, and epsilon) rotating inside the F1 region and a stationary peripheral stalk (subunits F6, b, d, and OSCP). The ATP synthase complex/complex V exists as a monomeric and a dimeric supercomplex that helps shape mitochondrial cristae to optimize proton flow. Ubiquitous. Highly expressed in skeletal and cardiac muscle. Moderately expressed in brain, thymus, stomach and testis. Lowest expression levels were detected in lung, liver, kidney, adrenal gland, spleen, small intestine and adipose tissue. In streptozotocin-induced diabetes, the insulin-sensitive tissues skeletal and cardiac muscle were down-regulated.

The protein resides in the mitochondrion membrane. In terms of biological role, subunit k, of the mitochondrial membrane ATP synthase complex (F(1)F(0) ATP synthase or Complex V) that produces ATP from ADP in the presence of a proton gradient across the membrane which is generated by electron transport complexes of the respiratory chain. ATP synthase complex consist of a soluble F(1) head domain - the catalytic core - and a membrane F(1) domain - the membrane proton channel. These two domains are linked by a central stalk rotating inside the F(1) region and a stationary peripheral stalk. During catalysis, ATP synthesis in the catalytic domain of F(1) is coupled via a rotary mechanism of the central stalk subunits to proton translocation. In vivo, can only synthesize ATP although its ATP hydrolase activity can be activated artificially in vitro. Part of the complex F(0) domain. Required for dimerization of the ATP synthase complex and as such regulates ATP synthesis in the mitochondria. The chain is ATP synthase F(0) complex subunit k, mitochondrial (Atp5mk) from Rattus norvegicus (Rat).